The chain runs to 404 residues: Cysteine desulfurase IscS (404 aa).

Residues 75–76 (AT), asparagine 155, glutamine 183, and 203–205 (SGH) each bind pyridoxal 5'-phosphate. At lysine 206 the chain carries N6-(pyridoxal phosphate)lysine. Threonine 243 provides a ligand contact to pyridoxal 5'-phosphate. Cysteine 328 functions as the Cysteine persulfide intermediate in the catalytic mechanism. A [2Fe-2S] cluster-binding site is contributed by cysteine 328.

Belongs to the class-V pyridoxal-phosphate-dependent aminotransferase family. NifS/IscS subfamily. Homodimer. Forms a heterotetramer with IscU, interacts with other sulfur acceptors. The cofactor is pyridoxal 5'-phosphate.

It localises to the cytoplasm. The enzyme catalyses (sulfur carrier)-H + L-cysteine = (sulfur carrier)-SH + L-alanine. It participates in cofactor biosynthesis; iron-sulfur cluster biosynthesis. In terms of biological role, master enzyme that delivers sulfur to a number of partners involved in Fe-S cluster assembly, tRNA modification or cofactor biosynthesis. Catalyzes the removal of elemental sulfur atoms from cysteine to produce alanine. Functions as a sulfur delivery protein for Fe-S cluster synthesis onto IscU, an Fe-S scaffold assembly protein, as well as other S acceptor proteins. The chain is Cysteine desulfurase IscS from Pectobacterium carotovorum subsp. carotovorum (strain PC1).